A 542-amino-acid polypeptide reads, in one-letter code: Cryptochrome-1 (542 aa).

One can recognise a Photolyase/cryptochrome alpha/beta domain in the interval 5-140 (GANVIWFRHG…DFVEKVSHTL (136 aa)). FAD is bound by residues arginine 237, serine 265, serine 267, glutamine 311, histidine 378, 410–412 (DAD), cysteine 416, and asparagine 419.

The protein belongs to the DNA photolyase class-1 family. As to quaternary structure, interacts with tim and per; promoted by light conditions. Interaction with tim irreversibly commits tim to proteasomal degradation. Interacts with l(1)G0136/CG8198. FAD is required as a cofactor. Expressed at higher levels in the head than in body and it is more expressed in antennae than in legs, wings and mouth appendages. Prominent expression is seen in cells of the lateral brain, which are close to or coincident with the clock neurons. Abundance oscillates in a circadian manner.

It is found in the cytoplasm. The protein resides in the perinuclear region. It localises to the nucleus. In terms of biological role, blue light-dependent regulator that is the input of the circadian feedback loop. Has no photolyase activity for cyclobutane pyrimidine dimers or 6-4 photoproducts. Regulation of expression by light suggests a role in photoreception for locomotor activity rhythms. Functions, together with per, as a transcriptional repressor required for the oscillation of peripheral circadian clocks and for the correct specification of clock cells. Genes directly activated by the transcription factors Clock (Clk) and cycle (cyc) are repressed by cry. Necessary for light-dependent magnetosensitivity, an intact circadian system is not required for the magnetoreception mechanism to operate. Required for both the naive and trained responses to magnetic field, consistent with the notion that cry is in the input pathway of magnetic sensing. This is Cryptochrome-1 from Drosophila melanogaster (Fruit fly).